Reading from the N-terminus, the 352-residue chain is Photosystem II D2 protein (352 aa).

Residues 40–60 (CAYLALGGWLTGTSFVTSWYT) form a helical membrane-spanning segment. H117 serves as a coordination point for chlorophyll a. A helical transmembrane segment spans residues 124 to 140 (GFMLRQFEIARLVGVRP). Pheophytin a is bound by residues Q129 and N142. The chain crosses the membrane as a helical span at residues 152–165 (VFVSVFLMYPLGQS). H197 is a chlorophyll a binding site. The chain crosses the membrane as a helical span at residues 207–227 (GALLCAIHGATVENTLFEDSE). H214 and F261 together coordinate a plastoquinone. H214 serves as a coordination point for Fe cation. H268 provides a ligand contact to Fe cation. The helical transmembrane segment at 278-294 (GLWMSSIGIVGLALNLR) threads the bilayer.

It belongs to the reaction center PufL/M/PsbA/D family. PSII is composed of 1 copy each of membrane proteins PsbA, PsbB, PsbC, PsbD, PsbE, PsbF, PsbH, PsbI, PsbJ, PsbK, PsbL, PsbM, PsbT, PsbX, PsbY, PsbZ, Psb30/Ycf12, peripheral proteins PsbO, CyanoQ (PsbQ), PsbU, PsbV and a large number of cofactors. It forms dimeric complexes. The D1/D2 heterodimer binds P680, chlorophylls that are the primary electron donor of PSII, and subsequent electron acceptors. It shares a non-heme iron and each subunit binds pheophytin, quinone, additional chlorophylls, carotenoids and lipids. There is also a Cl(-1) ion associated with D1 and D2, which is required for oxygen evolution. The PSII complex binds additional chlorophylls, carotenoids and specific lipids. serves as cofactor.

It is found in the cellular thylakoid membrane. The catalysed reaction is 2 a plastoquinone + 4 hnu + 2 H2O = 2 a plastoquinol + O2. Functionally, photosystem II (PSII) is a light-driven water:plastoquinone oxidoreductase that uses light energy to abstract electrons from H(2)O, generating O(2) and a proton gradient subsequently used for ATP formation. It consists of a core antenna complex that captures photons, and an electron transfer chain that converts photonic excitation into a charge separation. The D1/D2 (PsbA/PsbD) reaction center heterodimer binds P680, the primary electron donor of PSII as well as several subsequent electron acceptors. D2 is needed for assembly of a stable PSII complex. The polypeptide is Photosystem II D2 protein (Synechococcus elongatus (strain ATCC 33912 / PCC 7942 / FACHB-805) (Anacystis nidulans R2)).